A 346-amino-acid chain; its full sequence is 4-hydroxy-2-oxovalerate aldolase 2 (346 aa).

The 253-residue stretch at Val-8–Gln-260 folds into the Pyruvate carboxyltransferase domain. Substrate is bound at residue Arg-16–Asp-17. Asp-17 provides a ligand contact to Mn(2+). His-20 (proton acceptor) is an active-site residue. Residues Ser-170 and His-199 each coordinate substrate. His-199 and His-201 together coordinate Mn(2+). Substrate is bound at residue Tyr-290.

This sequence belongs to the 4-hydroxy-2-oxovalerate aldolase family.

The catalysed reaction is (S)-4-hydroxy-2-oxopentanoate = acetaldehyde + pyruvate. This Metapseudomonas furukawaii (Pseudomonas furukawaii) protein is 4-hydroxy-2-oxovalerate aldolase 2 (bphX3).